A 949-amino-acid polypeptide reads, in one-letter code: Glutamate receptor ionotropic, kainate 1 (949 aa).

An N-terminal signal peptide occupies residues 1 to 30 (MERSTVLIQPGLWTRDTSWTLLYFLCYILP). At 31–576 (QTSPQVLRIG…VFSFLNPLSP (546 aa)) the chain is on the extracellular side. N-linked (GlcNAc...) asparagine glycosylation is found at Asn-68, Asn-74, Asn-276, Asn-379, Asn-428, Asn-439, and Asn-446. L-glutamate contacts are provided by Pro-531, Thr-533, and Arg-538. Asn-561 carries N-linked (GlcNAc...) asparagine glycosylation. Residues 577–597 (DIWMYVLLACLGVSCVLFVIA) traverse the membrane as a helical segment. Residues 598-653 (RFTPYEWYNPHPCNPDSDVVENNFTLLNSFWFGVGALMQQGSELMPKALSTRIVGG) are Cytoplasmic-facing. Residues 654–674 (IWWFFTLIIISSYTANLAAFL) traverse the membrane as a helical segment. The Extracellular portion of the chain corresponds to 675–834 (TVERMESPID…KEASALGVEN (160 aa)). Residues Ser-704 and Thr-705 each contribute to the L-glutamate site. A Phosphoserine; by PKC modification is found at Ser-725. L-glutamate is bound at residue Glu-753. Thr-761 bears the Phosphothreonine; by PKC mark. Cysteines 765 and 819 form a disulfide. Asn-766 carries an N-linked (GlcNAc...) asparagine glycan. The chain crosses the membrane as a helical span at residues 835–855 (IGGIFIVLAAGLVLSVFVAIG). Residues 856–949 (EFLYKSRKNN…RRTQRKETVA (94 aa)) lie on the Cytoplasmic side of the membrane.

The protein belongs to the glutamate-gated ion channel (TC 1.A.10.1) family. GRIK1 subfamily. Homotetramer or heterotetramer of pore-forming glutamate receptor subunits. Tetramers may be formed by the dimerization of dimers. Can form functional heteromeric receptors with GRIK4 and GRIK5. Interacts with KLHL17. In terms of tissue distribution, expressed in the olfactory bulb (at protein level). Expressed in subsets of neurons throughout the developing and adult central and peripheral nervous systems. In the CNS principally in the medial amygdaloid nuclei, medial habenulae, pyriform and cingulate cortices, and Purkinje cell layer. Also highly expressed in embryonic and adult dorsal root ganglia. Expressed at high levels in the trigeminal ganglion neurons.

The protein resides in the cell membrane. Its subcellular location is the postsynaptic cell membrane. It carries out the reaction Ca(2+)(in) = Ca(2+)(out). Functionally, ionotropic glutamate receptor that functions as a cation-permeable ligand-gated ion channel, gated by L-glutamate and the glutamatergic agonist kainic acid. L-glutamate acts as an excitatory neurotransmitter at many synapses in the central nervous system. Binding of the excitatory neurotransmitter L-glutamate induces a conformation change, leading to the opening of the cation channel, and thereby converts the chemical signal to an electrical impulse. The receptor then desensitizes rapidly and enters a transient inactive state, characterized by the presence of bound agonist. The polypeptide is Glutamate receptor ionotropic, kainate 1 (Grik1) (Rattus norvegicus (Rat)).